The chain runs to 264 residues: ATP synthase subunit a (264 aa).

6 helical membrane-spanning segments follow: residues 27–47 (VHLD…FVFS), 87–107 (VGPL…IDLI), 131–151 (DISG…FYTI), 172–192 (LLIP…PVSL), 196–216 (LFGN…MYMA), and 230–250 (LAWA…FMML).

Belongs to the ATPase A chain family. In terms of assembly, F-type ATPases have 2 components, CF(1) - the catalytic core - and CF(0) - the membrane proton channel. CF(1) has five subunits: alpha(3), beta(3), gamma(1), delta(1), epsilon(1). CF(0) has three main subunits: a(1), b(2) and c(9-12). The alpha and beta chains form an alternating ring which encloses part of the gamma chain. CF(1) is attached to CF(0) by a central stalk formed by the gamma and epsilon chains, while a peripheral stalk is formed by the delta and b chains.

The protein localises to the cell inner membrane. Functionally, key component of the proton channel; it plays a direct role in the translocation of protons across the membrane. The sequence is that of ATP synthase subunit a from Pasteurella multocida (strain Pm70).